The primary structure comprises 137 residues: Cell division protein SepF (137 aa).

This sequence belongs to the SepF family. As to quaternary structure, homodimer. Interacts with FtsZ.

Its subcellular location is the cytoplasm. Cell division protein that is part of the divisome complex and is recruited early to the Z-ring. Probably stimulates Z-ring formation, perhaps through the cross-linking of FtsZ protofilaments. Its function overlaps with FtsA. The chain is Cell division protein SepF from Thermoanaerobacter pseudethanolicus (strain ATCC 33223 / 39E) (Clostridium thermohydrosulfuricum).